Consider the following 2495-residue polypeptide: Non-reducing polyketide synthase adrD (2495 aa).

Residues 14–252 (VVFGPQSSEI…HHSRHVTAVQ (239 aa)) are N-terminal acylcarrier protein transacylase domain (SAT). Residues 386–807 (VIPIAITGMG…GSNAALVVKQ (422 aa)) enclose the Ketosynthase family 3 (KS3) domain. Catalysis depends on for beta-ketoacyl synthase activity residues C551, H686, and H725. Positions 913 to 1222 (LCFGGQNGNE…QALDLGGALA (310 aa)) are malonyl-CoA:ACP transacylase (MAT) domain. S1000 acts as the For acyl/malonyl transferase activity in catalysis. The tract at residues 1294–1422 (KEFVQLLTKQ…GEISLHPFGQ (129 aa)) is N-terminal hotdog fold. Residues 1294-1601 (KEFVQLLTKQ…FTSVSIAGLS (308 aa)) enclose the PKS/mFAS DH domain. The segment at 1295–1600 (EFVQLLTKQP…TFTSVSIAGL (306 aa)) is product template (PT) domain. The active-site Proton acceptor; for dehydratase activity is H1325. The interval 1450 to 1601 (ESSGLKGFAV…FTSVSIAGLS (152 aa)) is C-terminal hotdog fold. D1508 (proton donor; for dehydratase activity) is an active-site residue. The region spanning 1651 to 1725 (SGHFMVVQEM…TLVQTIFPDA (75 aa)) is the Carrier domain. An O-(pantetheine 4'-phosphoryl)serine modification is found at S1685. The tract at residues 1887 to 2120 (QHTSEHNLLR…GFQWVDWTYN (234 aa)) is methyltransferase (CMeT) domain. A thioesterase (TE) domain region spans residues 2150 to 2495 (YLMNEETIVY…YEFLRDHVRY (346 aa)). Catalysis depends on for thioesterase activity residues S2273 and D2432.

The catalysed reaction is 3 malonyl-CoA + acetyl-CoA + 2 S-adenosyl-L-methionine = 3,5-dimethylorsellinate + 2 S-adenosyl-L-homocysteine + 3 CO2 + 4 CoA. Its pathway is secondary metabolite biosynthesis; terpenoid biosynthesis. Non-reducing polyketide synthase; part of the gene cluster that mediates the biosynthesis of andrastins, meroterpenoid compounds that exhibit inhibitory activity against ras farnesyltransferase, suggesting that they could be promising leads for antitumor agents. The first step of the pathway is the synthesis of 3,5-dimethylorsellinic acid (DMOA) by the polyketide synthase adrD via condensation of one acetyl-CoA starter unit with 3 malonyl-CoA units and 2 methylations. DMAO is then converted to farnesyl-DMAO by the prenyltransferase adrG. The methyltransferase adrK catalyzes the methylation of the carboxyl group of farnesyl-DMAO to farnesyl-DMAO methyl ester which is further converted to epoxyfarnesyl-DMAO methyl ester by the FAD-dependent monooxygenase adrH. The terpene cyclase adrI then catalyzes the carbon skeletal rearrangement to generate the andrastin E, the first compound in the pathway having the andrastin scaffold, with the tetracyclic ring system. The post-cyclization tailoring enzymes adrF, adrE, adrJ, and adrA, are involved in the conversion of andrastin E into andrastin A. The short chain dehydrogenase adrF is responsible for the oxidation of the C-3 a hydroxyl group of andrastin E to yield the corresponding ketone, andrastin D. The ketoreductase adrE stereoselectively reduces the carbonyl moiety to reverse the stereochemistry of the C-3 position to yield andrastin F. The acetyltransferase adrJ is the acetyltransferase that attaches the acetyl group to the C-3 hydroxyl group of andrastin F to yield andrastin C. Finally, the cytochrome P450 monooxygenase adrA catalyzes two sequential oxidation reactions of the C-23 methyl group, to generate the corresponding alcohol andrastin B, and aldehyde andrastin A. The sequence is that of Non-reducing polyketide synthase adrD from Penicillium roqueforti.